We begin with the raw amino-acid sequence, 32 residues long: Photosystem II reaction center protein Z (32 aa).

A helical membrane pass occupies residues 9–31 (FILLGAVTWAILVFIVGSLNSYV).

It belongs to the PsbZ family. As to quaternary structure, PSII is composed of 1 copy each of membrane proteins PsbA, PsbB, PsbC, PsbD, PsbE, PsbF, PsbH, PsbI, PsbJ, PsbK, PsbL, PsbM, PsbT, PsbY, PsbZ, Psb30/Ycf12, at least 3 peripheral proteins of the oxygen-evolving complex and a large number of cofactors. It forms dimeric complexes.

The protein localises to the plastid. Its subcellular location is the chloroplast thylakoid membrane. Functionally, may control the interaction of photosystem II (PSII) cores with the light-harvesting antenna, regulates electron flow through the 2 photosystem reaction centers. PSII is a light-driven water plastoquinone oxidoreductase, using light energy to abstract electrons from H(2)O, generating a proton gradient subsequently used for ATP formation. The polypeptide is Photosystem II reaction center protein Z (Euglena stellata).